The sequence spans 326 residues: Metallophosphoesterase domain-containing protein 1 (326 aa).

Belongs to the UPF0046 family. As to expression, expressed predominantly in adult brain.

In terms of biological role, may have metallophosphoesterase activity (in vitro). This Homo sapiens (Human) protein is Metallophosphoesterase domain-containing protein 1 (MPPED1).